The primary structure comprises 435 residues: ATP-dependent protease ATPase subunit HslU (435 aa).

ATP contacts are provided by residues Ile-18, 60 to 65, Asp-248, Glu-313, and Arg-385; that span reads GVGKTE.

This sequence belongs to the ClpX chaperone family. HslU subfamily. In terms of assembly, a double ring-shaped homohexamer of HslV is capped on each side by a ring-shaped HslU homohexamer. The assembly of the HslU/HslV complex is dependent on binding of ATP.

Its subcellular location is the cytoplasm. Functionally, ATPase subunit of a proteasome-like degradation complex; this subunit has chaperone activity. The binding of ATP and its subsequent hydrolysis by HslU are essential for unfolding of protein substrates subsequently hydrolyzed by HslV. HslU recognizes the N-terminal part of its protein substrates and unfolds these before they are guided to HslV for hydrolysis. The protein is ATP-dependent protease ATPase subunit HslU of Rhizobium meliloti (strain 1021) (Ensifer meliloti).